Consider the following 363-residue polypeptide: Cytochrome b (363 aa).

The next 4 helical transmembrane spans lie at 24 to 44 (VGFSLGFFIALQIICGVCLAW), 68 to 90 (FVIRSVHICFTSLLYLLLYIHIF), 105 to 125 (VWFIGFILFVFIIIIAFIGYV), and 171 to 191 (LHVLHVLLPFILLIILILHLF). The heme b site is built by histidine 74 and histidine 88. Residues histidine 175 and histidine 189 each coordinate heme b. Histidine 194 is a binding site for a ubiquinone. 4 helical membrane-spanning segments follow: residues 219-239 (FYLRDMFLAFSILLCMMYVIF), 287-307 (FLMVILLFSLFLFILNCILWF), 321-341 (LILFYSIWMSGFLALYVVLAY), and 342-362 (PIWMELQYWVLLLFLLIVCRL).

The protein belongs to the cytochrome b family. The main subunits of complex b-c1 are: cytochrome b, cytochrome c1 and the Rieske protein. Heme b serves as cofactor.

Its subcellular location is the mitochondrion inner membrane. Functionally, component of the ubiquinol-cytochrome c reductase complex (complex III or cytochrome b-c1 complex) that is part of the mitochondrial respiratory chain. The b-c1 complex mediates electron transfer from ubiquinol to cytochrome c. Contributes to the generation of a proton gradient across the mitochondrial membrane that is then used for ATP synthesis. This chain is Cytochrome b (MT-CYB), found in Trypanosoma brucei brucei.